We begin with the raw amino-acid sequence, 243 residues long: NH(3)-dependent NAD(+) synthetase (243 aa).

Position 31–38 (31–38 (GLSGGVDS)) interacts with ATP. Residue Asp37 coordinates Mg(2+). Arg116 serves as a coordination point for deamido-NAD(+). Thr136 lines the ATP pocket. Residue Glu141 coordinates Mg(2+). Deamido-NAD(+)-binding residues include Lys149 and Asp156. Residues Lys165 and Ser187 each coordinate ATP. 233-234 (HK) contributes to the deamido-NAD(+) binding site.

This sequence belongs to the NAD synthetase family. Homodimer.

It carries out the reaction deamido-NAD(+) + NH4(+) + ATP = AMP + diphosphate + NAD(+) + H(+). Its pathway is cofactor biosynthesis; NAD(+) biosynthesis; NAD(+) from deamido-NAD(+) (ammonia route): step 1/1. Functionally, catalyzes the ATP-dependent amidation of deamido-NAD to form NAD. Uses ammonia as a nitrogen source. The chain is NH(3)-dependent NAD(+) synthetase from Carboxydothermus hydrogenoformans (strain ATCC BAA-161 / DSM 6008 / Z-2901).